The sequence spans 82 residues: Small ribosomal subunit protein bS16 (82 aa).

Belongs to the bacterial ribosomal protein bS16 family.

This is Small ribosomal subunit protein bS16 from Edwardsiella ictaluri (strain 93-146).